Consider the following 171-residue polypeptide: S-ribosylhomocysteine lyase (171 aa).

Positions 54, 58, and 128 each coordinate Fe cation.

Belongs to the LuxS family. Homodimer. The cofactor is Fe cation.

It catalyses the reaction S-(5-deoxy-D-ribos-5-yl)-L-homocysteine = (S)-4,5-dihydroxypentane-2,3-dione + L-homocysteine. In terms of biological role, involved in the synthesis of autoinducer 2 (AI-2) which is secreted by bacteria and is used to communicate both the cell density and the metabolic potential of the environment. The regulation of gene expression in response to changes in cell density is called quorum sensing. Catalyzes the transformation of S-ribosylhomocysteine (RHC) to homocysteine (HC) and 4,5-dihydroxy-2,3-pentadione (DPD). In Enterobacter sp. (strain 638), this protein is S-ribosylhomocysteine lyase.